The sequence spans 380 residues: Mitogen-activated protein kinase mpkC (380 aa).

The Protein kinase domain occupies 20 to 300; sequence YVNLQPIGMG…AQDALRHPYL (281 aa). ATP is bound by residues 26–34 and Lys-49; that span reads IGMGSFGLV. Asp-141 functions as the Proton acceptor in the catalytic mechanism. A Phosphothreonine modification is found at Thr-171. The TXY motif lies at 171-173; that stretch reads TGY. Tyr-173 is modified (phosphotyrosine).

Belongs to the protein kinase superfamily. Ser/Thr protein kinase family. MAP kinase subfamily. HOG1 sub-subfamily. The cofactor is Mg(2+). Dually phosphorylated on Thr-171 and Tyr-173, which activates the enzyme.

The catalysed reaction is L-seryl-[protein] + ATP = O-phospho-L-seryl-[protein] + ADP + H(+). It catalyses the reaction L-threonyl-[protein] + ATP = O-phospho-L-threonyl-[protein] + ADP + H(+). Its activity is regulated as follows. Activated by tyrosine and threonine phosphorylation. Its function is as follows. Mitogen-activated protein kinase required for growth on media where sorbitol or mannitol is the sole carbon source. In Aspergillus clavatus (strain ATCC 1007 / CBS 513.65 / DSM 816 / NCTC 3887 / NRRL 1 / QM 1276 / 107), this protein is Mitogen-activated protein kinase mpkC (mpkC).